The chain runs to 257 residues: Regulator of G-protein signaling 7-binding protein (257 aa).

The segment at 1–45 is disordered; it reads MSSAPNGRKKRPSRSTRSSIFQISKPPLQSGDWERRGSGSESAHK. Residues 32 to 45 are compositionally biased toward basic and acidic residues; sequence DWERRGSGSESAHK. Residues 242-247 carry the Nuclear localization signal motif; the sequence is RRRKRR. S-palmitoyl cysteine attachment occurs at residues Cys252 and Cys253.

This sequence belongs to the RGS7BP/RGS9BP family. As to quaternary structure, interacts with 'R7' family proteins RGS6, RGS7, RGS9 and RGS11. Component of some R7-Gbeta5 complex composed of some R7 protein (RGS6, RGS7, RGS9 or RGS11), Gbeta5 (GNB5) and RGS7BP. Palmitoylated. Undergoes rapid palmitoylation turnover. De novo and turnover palmitoylation are both mediated by ZDHHC2. Palmitoylation regulates the cell membrane and nuclear shuttling and the regulation of GPCR signaling. Upon depalmitoylation, it is targeted from the plasma membrane into the nucleus. GPCR signaling inhibits depalmitoylation and promotes localization to the plasma membrane. In terms of tissue distribution, specifically expressed in the central nervous system including the retina but not in other non-neuronal tissues (at protein level).

It is found in the nucleus. The protein resides in the cytoplasm. The protein localises to the cell membrane. Functionally, regulator of G protein-coupled receptor (GPCR) signaling. Regulatory subunit of the R7-Gbeta5 complexes that acts by controlling the subcellular location of the R7-Gbeta5 complexes. When palmitoylated, it targets the R7-Gbeta5 complexes to the plasma membrane, leading to inhibit G protein alpha subunits. When it is unpalmitoylated, the R7-Gbeta5 complexes undergo a nuclear/cytoplasmic shuttling. May also act by controlling the proteolytic stability of R7 proteins, probably by protecting them from degradation. This chain is Regulator of G-protein signaling 7-binding protein (Rgs7bp), found in Mus musculus (Mouse).